The following is a 228-amino-acid chain: uncharacterized protein (228 aa).

This is an uncharacterized protein from Mycobacterium tuberculosis (strain CDC 1551 / Oshkosh).